A 449-amino-acid polypeptide reads, in one-letter code: Probable glycosyltransferase 5 (449 aa).

The span at 1–14 shows a compositional bias: basic and acidic residues; it reads MMEKHGGKVTSDRR. The tract at residues 1 to 24 is disordered; sequence MMEKHGGKVTSDRRAGRRQHGQRC. The Cytoplasmic portion of the chain corresponds to 1-28; that stretch reads MMEKHGGKVTSDRRAGRRQHGQRCSASD. A helical; Signal-anchor for type II membrane protein membrane pass occupies residues 29–49; it reads AAPLVVVVILIVGALFLILGP. The Lumenal portion of the chain corresponds to 50–449; it reads TGSSSFTVPR…HPTFRAARPT (400 aa). The tract at residues 74-109 is disordered; that stretch reads APPPPPPPAQMQAGANASSEEDSGLPPPRQLTDPPY. N89, N413, and N422 each carry an N-linked (GlcNAc...) asparagine glycan.

The protein belongs to the glycosyltransferase 34 family.

The protein localises to the golgi apparatus membrane. Probable glycosyltransferase that may be involved in the biosynthesis of xyloglucan. The polypeptide is Probable glycosyltransferase 5 (Oryza sativa subsp. indica (Rice)).